Here is a 485-residue protein sequence, read N- to C-terminus: MTPNRRSTDSYNMLGASFDFDPDFSLLSNKTHKNKNPKPPVKLLPYRHGSNTTSSDLDNYIFNSGSGSSDDETPPPAAPIFISLEEVLLNGLLIDFAIDPSGVKFLEANYPLDSEDQIRKAVFEKLTESTTLFVGLCHSRNGNFIVQKLVELATPAEQRELLRQMIDGGLLVMCKDKFACRVVQLALQKFDHSNVFQLIQELSTFDLAAMCTDQISIHVIQRVVKQLPVDMWTFFVHFLSSGDSLMAVCQDKYGCRLVQQVIDRLAENPKLPCFKFRIQLLHSLMTCIVRNCYRLSSNEFANYVIQYVIKSSGIMEMYRDTIIDKCLLRNLLSMSQDKYASHVIEGAFLFAPPALLHEMMEEIFSGYVKDVELNRDALDILLFHQYGNYVVQQMISICTAALIGKEERQLPPAILLLYSGWYEKMKQRVLQHASRLERFSSGKKIIDSVMRHGVPTAAAINAQAAPSLMELTAQFDAMFPSFLAR.

Disordered regions lie at residues 29-48 (NKTH…PYRH) and 55-76 (SDLD…TPPP). The span at 55–68 (SDLDNYIFNSGSGS) shows a compositional bias: polar residues. Pumilio repeat units lie at residues 86–124 (EVLL…AVFE), 125–163 (KLTE…ELLR), 164–200 (QMID…QLIQ), 201–236 (ELST…TFFV), 237–279 (HFLS…FRIQ), 287–324 (CIVR…TIID), 326–361 (CLLR…EMME), and 372–411 (ELNR…RQLP). An RNA-binding region spans residues 439-454 (FSSGKKIIDSVMRHGV).

Its function is as follows. RNA-binding protein that binds to the consensus sequence 5'-CUCUGUAUCUUGU-3' in mRNA 3'-UTRs and modulates mRNA expression and stability. Functions redundantly with puf-5 and puf-7 in oocyte formation and organization, early embryonic cell divisions, and repression of expression of glp-1 and other maternal mRNAs in late oogenesis. The protein is Pumilio domain-containing protein 6 of Caenorhabditis elegans.